Consider the following 363-residue polypeptide: G-protein coupled receptor 78 (363 aa).

The Extracellular segment spans residues 1 to 7 (MGPGEAL). The helical transmembrane segment at 8-28 (LAGLLVMVLAVALLSNALVLL) threads the bilayer. The Cytoplasmic segment spans residues 29 to 47 (CCAYSAELRTRASGVLLVN). A helical membrane pass occupies residues 48-68 (LSLGHLLLAALDMPFTLLGVM). Residues 69–80 (RGRTPSAPGACQ) are Extracellular-facing. Cys-79 and Cys-156 are oxidised to a cystine. Residues 81–101 (VIGFLDTFLASNAALSVAALS) traverse the membrane as a helical segment. Over 102–122 (ADQWLAVGFPLRYAGRLRPRY) the chain is Cytoplasmic. Residues 123–143 (AGLLLGCAWGQSLAFSGAALG) form a helical membrane-spanning segment. Residues 144–168 (CSWLGYSSAFASCSLRLPPEPERPR) are Extracellular-facing. The helical transmembrane segment at 169–189 (FAAFTATLHAVGFVLPLAVLC) threads the bilayer. Residues 190 to 242 (LTSLQVHRVARRHCQRMDTVTMKALALLADLHPSVRQRCLIQQKRRRHRATRK) lie on the Cytoplasmic side of the membrane. Residues 243–263 (IGIAIATFLICFAPYVMTRLA) form a helical membrane-spanning segment. Residues 264–277 (ELVPFVTVNAQWGI) lie on the Extracellular side of the membrane. A helical membrane pass occupies residues 278–297 (LSKCLTYSKAVADPFTYSLL). Residues 298 to 363 (RRPFRQVLAG…ENDSCLQQTH (66 aa)) are Cytoplasmic-facing. Residues 340 to 363 (TPRPASTHNGSVDTENDSCLQQTH) are disordered. Residues 343–363 (PASTHNGSVDTENDSCLQQTH) show a composition bias toward polar residues.

The protein belongs to the G-protein coupled receptor 1 family. High level of expression in placenta. Expressed throughout the brain at low level. No expression detected in skeletal muscle, lung, heart, liver, pancreas, or kidney.

The protein resides in the cell membrane. In terms of biological role, orphan receptor. Displays a significant level of constitutive activity. Its effect is mediated by G(s)-alpha protein that stimulate adenylate cyclase, resulting in an elevation of intracellular cAMP. This is G-protein coupled receptor 78 (GPR78) from Homo sapiens (Human).